A 409-amino-acid chain; its full sequence is MLISNVGINPAAYLNNHSVENSSQTASQSVSAKDILNSIGISSSKVSDLGLSPTLSAPAPGVLTQTPGTITSFLKASIQNTDMNQDLNALANNVTTKANEVVQTQLREQQAEVGKFFDISGMSSSAVALLAAANTLMLTLNQADSKLSGKLSLVSFDAAKTTASSMMREGMNALSGSISQSALQLGITGVGAKLEYKGLQNERGALKHNAAKIDKLTTESHSIKNVLNGQNSVKLGAEGVDSLKSLNMKKTGTDATKNLNDATLKSNAGTSATESLGIKDSNKQISPEHQAILSKRLESVESDIRLEQNTMDMTRIDARKMQMTGDLIMKNSVTVGGIAGASGQYAATQERSEQQISQVNNRVASTASDEARESSRKSTSLIQEMLKTMESINQSKASALAAIAGNIRA.

A helical membrane pass occupies residues 119 to 140 (ISGMSSSAVALLAAANTLMLTL).

It belongs to the SctB/SipC family. As to quaternary structure, the core secretion machinery of the T3SS is composed of approximately 20 different proteins, including cytoplasmic components, a base, an export apparatus and a needle. This subunit is involved in the formation of a pore, called the translocon, in host membrane.

It localises to the secreted. Its subcellular location is the host membrane. Component of the type III secretion system 1 (SPI-1 T3SS), also called injectisome, which is used to inject bacterial effector proteins into eukaryotic host cells. SipB/SctE1 and SipC/SctB1 are inserted into the host membrane where they form a pore and allow the translocation of effector proteins into the cytosol of target cells. This is SPI-1 type 3 secretion system translocon protein SctB from Salmonella typhimurium (strain 14028s / SGSC 2262).